The sequence spans 369 residues: Peptide chain release factor 2 (369 aa).

At Q251 the chain carries N5-methylglutamine.

It belongs to the prokaryotic/mitochondrial release factor family. In terms of processing, methylated by PrmC. Methylation increases the termination efficiency of RF2.

It localises to the cytoplasm. Its function is as follows. Peptide chain release factor 2 directs the termination of translation in response to the peptide chain termination codons UGA and UAA. The polypeptide is Peptide chain release factor 2 (prfB) (Chlamydia pneumoniae (Chlamydophila pneumoniae)).